The following is a 605-amino-acid chain: Bifunctional purine biosynthesis protein ADE16 (605 aa).

Residues 1-147 enclose the MGS-like domain; that stretch reads MSSEAPIALL…KNHGRVSIIS (147 aa). IMP is bound by residues 35–38, 65–68, 102–103, and 126–127; these read SGGT, RVKT, CN, and DI. Lys-138 functions as the Proton donor/acceptor; for FAICAR cyclization activity in the catalytic mechanism. 5-amino-1-(5-phospho-beta-D-ribosyl)imidazole-4-carboxamide contacts are provided by residues 219-220, His-279, Gly-327, Asp-350, Asn-442, and Arg-462; that span reads RY. The active-site Proton acceptor; for AICAR formyltransferase activity is His-279. Ile-463 lines the (6R)-10-formyltetrahydrofolate pocket. Position 554 (Phe-554) interacts with 5-amino-1-(5-phospho-beta-D-ribosyl)imidazole-4-carboxamide. Asp-559 is a binding site for (6R)-10-formyltetrahydrofolate. A 5-amino-1-(5-phospho-beta-D-ribosyl)imidazole-4-carboxamide-binding site is contributed by Arg-601.

The protein belongs to the PurH family. Homodimer.

It is found in the cytoplasm. It localises to the cytosol. The enzyme catalyses (6R)-10-formyltetrahydrofolate + 5-amino-1-(5-phospho-beta-D-ribosyl)imidazole-4-carboxamide = 5-formamido-1-(5-phospho-D-ribosyl)imidazole-4-carboxamide + (6S)-5,6,7,8-tetrahydrofolate. It carries out the reaction IMP + H2O = 5-formamido-1-(5-phospho-D-ribosyl)imidazole-4-carboxamide. It participates in purine metabolism; IMP biosynthesis via de novo pathway; 5-formamido-1-(5-phospho-D-ribosyl)imidazole-4-carboxamide from 5-amino-1-(5-phospho-D-ribosyl)imidazole-4-carboxamide (10-formyl THF route): step 1/1. It functions in the pathway purine metabolism; IMP biosynthesis via de novo pathway; IMP from 5-formamido-1-(5-phospho-D-ribosyl)imidazole-4-carboxamide: step 1/1. Its function is as follows. Bifunctional enzyme that catalyzes the last two steps of purine biosynthesis. Acts as a transformylase that incorporates a formyl group to the AMP analog AICAR (5-amino-1-(5-phospho-beta-D-ribosyl)imidazole-4-carboxamide) to produce the intermediate formyl-AICAR (FAICAR). Also catalyzes the cyclization of FAICAR to IMP. This Cryptococcus neoformans var. grubii serotype A (strain H99 / ATCC 208821 / CBS 10515 / FGSC 9487) (Filobasidiella neoformans var. grubii) protein is Bifunctional purine biosynthesis protein ADE16.